The following is a 346-amino-acid chain: Histidinol-phosphate aminotransferase (346 aa).

At Lys-209 the chain carries N6-(pyridoxal phosphate)lysine.

This sequence belongs to the class-II pyridoxal-phosphate-dependent aminotransferase family. Histidinol-phosphate aminotransferase subfamily. As to quaternary structure, homodimer. Requires pyridoxal 5'-phosphate as cofactor.

The catalysed reaction is L-histidinol phosphate + 2-oxoglutarate = 3-(imidazol-4-yl)-2-oxopropyl phosphate + L-glutamate. It functions in the pathway amino-acid biosynthesis; L-histidine biosynthesis; L-histidine from 5-phospho-alpha-D-ribose 1-diphosphate: step 7/9. The chain is Histidinol-phosphate aminotransferase from Vibrio parahaemolyticus serotype O3:K6 (strain RIMD 2210633).